Consider the following 275-residue polypeptide: Formamidopyrimidine-DNA glycosylase (275 aa).

Pro-2 functions as the Schiff-base intermediate with DNA in the catalytic mechanism. Residue Glu-3 is the Proton donor of the active site. Lys-58 (proton donor; for beta-elimination activity) is an active-site residue. Positions 93, 111, and 156 each coordinate DNA. The FPG-type zinc-finger motif lies at 241-275 (FVYDRAGQPCRVCNTPIRQIVQGQRSTYFCPTCQR). The active-site Proton donor; for delta-elimination activity is Arg-265.

Belongs to the FPG family. As to quaternary structure, monomer. The cofactor is Zn(2+).

It catalyses the reaction Hydrolysis of DNA containing ring-opened 7-methylguanine residues, releasing 2,6-diamino-4-hydroxy-5-(N-methyl)formamidopyrimidine.. It carries out the reaction 2'-deoxyribonucleotide-(2'-deoxyribose 5'-phosphate)-2'-deoxyribonucleotide-DNA = a 3'-end 2'-deoxyribonucleotide-(2,3-dehydro-2,3-deoxyribose 5'-phosphate)-DNA + a 5'-end 5'-phospho-2'-deoxyribonucleoside-DNA + H(+). In terms of biological role, involved in base excision repair of DNA damaged by oxidation or by mutagenic agents. Acts as a DNA glycosylase that recognizes and removes damaged bases. Has a preference for oxidized purines, such as 7,8-dihydro-8-oxoguanine (8-oxoG). Has AP (apurinic/apyrimidinic) lyase activity and introduces nicks in the DNA strand. Cleaves the DNA backbone by beta-delta elimination to generate a single-strand break at the site of the removed base with both 3'- and 5'-phosphates. This Burkholderia lata (strain ATCC 17760 / DSM 23089 / LMG 22485 / NCIMB 9086 / R18194 / 383) protein is Formamidopyrimidine-DNA glycosylase.